The primary structure comprises 79 residues: Potassium channel toxin Hge-beta-KTx (79 aa).

An N-terminal signal peptide occupies residues 1–21 (MAKSFFAAFLIIMLISSLVDG). The 32-residue stretch at 48–79 (EYMCPVVSSFCKQHCARLGKSGQCDLLECICS) folds into the BetaSPN-type CS-alpha/beta domain. Cystine bridges form between C51–C71, C58–C76, and C62–C78.

In terms of tissue distribution, expressed by the venom gland.

It localises to the secreted. In terms of biological role, the full peptide presents antibacterial and cytotoxic activities. The synthetic C-terminus (AA 33-76) inhibits voltage-gated potassium channels Kv1.1/KCNA1, Kv1.2/KCNA2, and Kv1.3/KCNA3. The chain is Potassium channel toxin Hge-beta-KTx from Hoffmannihadrurus gertschi (Scorpion).